Consider the following 238-residue polypeptide: Small ribosomal subunit protein uS3 (238 aa).

Residues 39–109 (IRTFINQQLA…TIKVNVVEVN (71 aa)) enclose the KH type-2 domain. The segment at 215–238 (EAVPREATRRSPQRRLPQFENRSN) is disordered.

It belongs to the universal ribosomal protein uS3 family. In terms of assembly, part of the 30S ribosomal subunit. Forms a tight complex with proteins S10 and S14.

In terms of biological role, binds the lower part of the 30S subunit head. Binds mRNA in the 70S ribosome, positioning it for translation. This is Small ribosomal subunit protein uS3 from Thermosynechococcus vestitus (strain NIES-2133 / IAM M-273 / BP-1).